Reading from the N-terminus, the 481-residue chain is Transcription factor TGA9 (481 aa).

The segment at 91–181 (QTLPTESSKS…GKQLDAKTLR (91 aa)) is disordered. Residues 97-109 (SSKSGGESSDSGS) show a composition bias toward low complexity. The segment covering 110 to 126 (ANFSGKAESQQPESPMS) has biased composition (polar residues). The span at 143–155 (SSSTSGLPSTSRT) shows a compositional bias: low complexity. The short motif at 165–172 (KRKATTSG) is the Nuclear localization signal element. Residues 176–220 (DAKTLRRLAQNREAARKSRLRKKAYVQQLESSRIKLSQLEQELQR) enclose the bZIP domain. The interval 178–198 (KTLRRLAQNREAARKSRLRKK) is basic motif. The interval 204-218 (LESSRIKLSQLEQEL) is leucine-zipper. The DOG1 domain maps to 242 to 450 (AAIFDMEYGR…RALSSLWLSR (209 aa)).

It belongs to the bZIP family. In terms of assembly, homodimer. Binds DNA as a dimer. Interacts with floral glutaredoxins GRXC7/ROXY1 and GRXC8/ROXY2 in the nucleus. Interacts with TGA1, TGA2, TGA3, TGA4, TGA5, TGA6, TGA7, TGA10 and PAN. Mostly expressed in stems, inflorescence apex and flowers, and, to a lower extent, in seedlings, leaves and siliques.

It is found in the nucleus. Its function is as follows. Together with TGA10, basic leucine-zipper transcription factor required for anther development, probably via the activation of SPL expression in anthers and via the regulation of genes with functions in early and middle tapetal development. Required for signaling responses to pathogen-associated molecular patterns (PAMPs) such as flg22 that involves chloroplastic reactive oxygen species (ROS) production and subsequent expression of H(2)O(2)-responsive genes. The chain is Transcription factor TGA9 from Arabidopsis thaliana (Mouse-ear cress).